Reading from the N-terminus, the 599-residue chain is Adenine deaminase (599 aa).

This sequence belongs to the metallo-dependent hydrolases superfamily. Adenine deaminase family. Mn(2+) serves as cofactor.

It carries out the reaction adenine + H2O + H(+) = hypoxanthine + NH4(+). The polypeptide is Adenine deaminase (Clostridium botulinum (strain Loch Maree / Type A3)).